The sequence spans 265 residues: U6 snRNA phosphodiesterase 1 (265 aa).

The segment at 1 to 67 (MSAAPLVGYS…EGPVDDSAKH (67 aa)) is disordered. Residues 20–32 (AGARVRPGAEGRS) show a composition bias toward basic and acidic residues. His120 acts as the Proton acceptor in catalysis. An AMP-binding site is contributed by 120 to 122 (HLS). UMP contacts are provided by residues Gln164, Tyr202, and 206-210 (SFHIS). AMP contacts are provided by residues Tyr202 and 204–210 (DPSFHIS). The active-site Proton donor is His208.

The protein belongs to the 2H phosphoesterase superfamily. USB1 family. As to quaternary structure, interacts with PLRG1, CDC5L and PRPF19.

Its subcellular location is the nucleus. It carries out the reaction a 3'-end uridylyl-uridine-RNA = a 3'-end 2',3'-cyclophospho-uridine-RNA + uridine. The enzyme catalyses a 3'-end uridylyl-adenosine-RNA = a 3'-end 2',3'-cyclophospho-uridine-RNA + adenosine. Functionally, 3'-5' RNA exonuclease that trims the 3' end of oligo(U) and oligo(A) tracts of the pre-U6 small nuclear RNA (snRNA) molecule, leading to the formation of a mature U6 snRNA 3' end-terminated with a 2',3'-cyclic phosphate. Participates in the U6 snRNA 3' end processing that prevents U6 snRNA degradation. In addition also removes uridines from the 3' end of U6atac snRNA and possibly the vault RNA VTRNA1-1. The polypeptide is U6 snRNA phosphodiesterase 1 (Bos taurus (Bovine)).